The chain runs to 644 residues: Polyglycine hydrolase (644 aa).

The N-terminal stretch at methionine 1 to serine 23 is a signal peptide. N-linked (GlcNAc...) asparagine glycosylation is found at asparagine 100, asparagine 144, asparagine 159, asparagine 244, and asparagine 340. An intrachain disulfide couples cysteine 149 to cysteine 183. Serine 369 is a catalytic residue. N-linked (GlcNAc...) asparagine glycosylation is found at asparagine 389, asparagine 410, asparagine 443, and asparagine 486.

Belongs to the peptidase S12 family.

The protein localises to the secreted. It catalyses the reaction a glycyl-glycyl-[protein] + H2O = N-terminal glycyl-[protein] + [protein]-C-terminal glycine. Not inhibited by phenylmethylsulfonyl fluoride (PMSF; serine peptidase class S1 inhibitor), clavulanic acid (beta-lactamase inhibitor) or ampicillin (penicillin-binding protein (PBP) inhibitor). In terms of biological role, serine-type endopeptidase that cleaves Gly-Gly bonds in the polyglycine linker of host plant class IV chitinases to disrupt their chitin-binding, and thereby plays a role in lowering the defense responses of the host to the fungus. Degrades Z.mays Endochitinase A (CHIA). Has low proteolytic activity on Z.mays Endochitinase B (CHIB). In Cochliobolus carbonum (strain 26-R-13) (Maize leaf spot fungus), this protein is Polyglycine hydrolase.